Consider the following 113-residue polypeptide: Large ribosomal subunit protein uL22 (113 aa).

The protein belongs to the universal ribosomal protein uL22 family. Part of the 50S ribosomal subunit.

In terms of biological role, this protein binds specifically to 23S rRNA; its binding is stimulated by other ribosomal proteins, e.g. L4, L17, and L20. It is important during the early stages of 50S assembly. It makes multiple contacts with different domains of the 23S rRNA in the assembled 50S subunit and ribosome. Its function is as follows. The globular domain of the protein is located near the polypeptide exit tunnel on the outside of the subunit, while an extended beta-hairpin is found that lines the wall of the exit tunnel in the center of the 70S ribosome. In Roseiflexus sp. (strain RS-1), this protein is Large ribosomal subunit protein uL22.